The chain runs to 432 residues: Adenylosuccinate synthetase (432 aa).

Residues 12-18 and 40-42 each bind GTP; these read GDEGKGK and GHT. D13 acts as the Proton acceptor in catalysis. 2 residues coordinate Mg(2+): D13 and G40. Residues 13-16, 38-41, T132, R146, Q226, T241, and R305 contribute to the IMP site; these read DEGK and NAGH. The active-site Proton donor is H41. 301–307 is a substrate binding site; sequence VVTGRKR. Residues R307, 333–335, and 415–417 contribute to the GTP site; these read KLD and STS.

It belongs to the adenylosuccinate synthetase family. As to quaternary structure, homodimer. Mg(2+) is required as a cofactor.

It is found in the cytoplasm. The enzyme catalyses IMP + L-aspartate + GTP = N(6)-(1,2-dicarboxyethyl)-AMP + GDP + phosphate + 2 H(+). The protein operates within purine metabolism; AMP biosynthesis via de novo pathway; AMP from IMP: step 1/2. Its function is as follows. Plays an important role in the de novo pathway of purine nucleotide biosynthesis. Catalyzes the first committed step in the biosynthesis of AMP from IMP. The sequence is that of Adenylosuccinate synthetase from Rhizobium etli (strain CIAT 652).